The chain runs to 370 residues: Queuine tRNA-ribosyltransferase (370 aa).

The active-site Proton acceptor is aspartate 89. Substrate-binding positions include 89-93 (DSGGF), aspartate 143, and glycine 214. The segment at 245–251 (GVGKPED) is RNA binding. The active-site Nucleophile is the aspartate 264. An RNA binding; important for wobble base 34 recognition region spans residues 269–273 (TRNAR). Zn(2+)-binding residues include cysteine 302, cysteine 304, cysteine 307, and histidine 333.

Belongs to the queuine tRNA-ribosyltransferase family. Homodimer. Within each dimer, one monomer is responsible for RNA recognition and catalysis, while the other monomer binds to the replacement base PreQ1. The cofactor is Zn(2+).

The enzyme catalyses 7-aminomethyl-7-carbaguanine + guanosine(34) in tRNA = 7-aminomethyl-7-carbaguanosine(34) in tRNA + guanine. It functions in the pathway tRNA modification; tRNA-queuosine biosynthesis. Catalyzes the base-exchange of a guanine (G) residue with the queuine precursor 7-aminomethyl-7-deazaguanine (PreQ1) at position 34 (anticodon wobble position) in tRNAs with GU(N) anticodons (tRNA-Asp, -Asn, -His and -Tyr). Catalysis occurs through a double-displacement mechanism. The nucleophile active site attacks the C1' of nucleotide 34 to detach the guanine base from the RNA, forming a covalent enzyme-RNA intermediate. The proton acceptor active site deprotonates the incoming PreQ1, allowing a nucleophilic attack on the C1' of the ribose to form the product. After dissociation, two additional enzymatic reactions on the tRNA convert PreQ1 to queuine (Q), resulting in the hypermodified nucleoside queuosine (7-(((4,5-cis-dihydroxy-2-cyclopenten-1-yl)amino)methyl)-7-deazaguanosine). The polypeptide is Queuine tRNA-ribosyltransferase (Buchnera aphidicola subsp. Acyrthosiphon pisum (strain 5A)).